A 98-amino-acid chain; its full sequence is Signal peptidase complex subunit 1 (98 aa).

The Cytoplasmic segment spans residues 1–18 (MLDIQTHMDFAGQGKAER). A helical transmembrane segment spans residues 19 to 38 (WSRFIITFFGIVGLVYGAFV). The Lumenal segment spans residues 39-42 (QQFS). The helical transmembrane segment at 43–65 (QTVYILGAGFVLSSLITIPPWPL) threads the bilayer. The Cytoplasmic portion of the chain corresponds to 66–98 (YRRNALKWQKPIDTDAKSSSSESGDEGKKKKKQ). Residues 78 to 98 (DTDAKSSSSESGDEGKKKKKQ) are disordered. Residues serine 84, serine 85, serine 86, and serine 88 each carry the phosphoserine modification.

It belongs to the SPCS1 family. In terms of assembly, component of the signal peptidase complex (SPC) composed of a catalytic subunit twr/SEC11 and three accessory subunits Spase12/SPCS1, Spase25/SPCS2 and Spase22-23/SPCS3. The complex induces a local thinning of the ER membrane which is used to measure the length of the signal peptide (SP) h-region of protein substrates. This ensures the selectivity of the complex towards h-regions shorter than 18-20 amino acids.

It is found in the endoplasmic reticulum membrane. Its function is as follows. Component of the signal peptidase complex (SPC) which catalyzes the cleavage of N-terminal signal sequences from nascent proteins as they are translocated into the lumen of the endoplasmic reticulum. Dispensable for SPC enzymatic activity. Functionally, (Microbial infection) Plays an important role in infection by flaviviruses such as West Nile virus and Dengue virus type 2. This is Signal peptidase complex subunit 1 (Spase12) from Drosophila melanogaster (Fruit fly).